The sequence spans 824 residues: Cell division cycle protein 27 homolog (824 aa).

TPR repeat units follow at residues 6–35 (EPVQ…YAEV), 38–65 (EEAL…KGHS), 67–99 (TTPQ…VFNK), and 115–145 (CFTL…LSLN). 3 positions are modified to phosphothreonine: Thr-205, Thr-209, and Thr-244. Residues 287–422 (LETPSPGDGS…TNKGGITQPN (136 aa)) are disordered. Ser-291 carries the post-translational modification Phosphoserine. Thr-313 bears the Phosphothreonine mark. Over residues 326–341 (QTGTKSVFSQSGNSRE) the composition is skewed to polar residues. Ser-339 is subject to Phosphoserine. Residues 348-361 (QTQSSGPQTSTTPQ) show a composition bias toward low complexity. The segment covering 362 to 371 (VLSPTITSPP) has biased composition (polar residues). Thr-366 is subject to Phosphothreonine. Ser-379 and Ser-386 each carry phosphoserine. Residues 380 to 390 (RLFTSDSSTTK) show a composition bias toward polar residues. Residues 395-413 (KLKMKFPPKIPNRKTKSKT) show a composition bias toward basic residues. Position 426 is a phosphoserine (Ser-426). Position 430 is a phosphothreonine (Thr-430). Ser-435 and Ser-438 each carry phosphoserine. Thr-446 is subject to Phosphothreonine. TPR repeat units follow at residues 465-495 (LLRE…PSHH), 499-528 (GWVL…VRRI), 533-563 (VEGM…TDMD), 567-598 (PEAW…QVDP), 601-631 (AYAY…IRVN), 635-667 (YNAW…INPQ), 670-702 (VLLC…DPKN), 704-734 (LCKF…QIVP), and 737-768 (SLVY…DLDP). The tract at residues 781–824 (KRYLPDDEEPITQEEQIMGTDESQESSMTDADDTQLHAAESDEF) is disordered. Residue Ser-821 is modified to Phosphoserine.

This sequence belongs to the APC3/CDC27 family. Homodimer. The mammalian APC/C is composed at least of 14 distinct subunits ANAPC1, ANAPC2, CDC27/APC3, ANAPC4, ANAPC5, CDC16/APC6, ANAPC7, CDC23/APC8, ANAPC10, ANAPC11, CDC26/APC12, ANAPC13, ANAPC15 and ANAPC16 that assemble into a complex of at least 19 chains with a combined molecular mass of around 1.2 MDa; APC/C interacts with FZR1 and FBXO5. Interacts with RB. Interacts with FAM168B/MANI. Interacts with MCPH1. Phosphorylated. Phosphorylation on Ser-426 and Thr-446 occurs specifically during mitosis.

Its subcellular location is the nucleus. It localises to the cytoplasm. The protein localises to the cytoskeleton. It is found in the spindle. It participates in protein modification; protein ubiquitination. Its function is as follows. Component of the anaphase promoting complex/cyclosome (APC/C), a cell cycle-regulated E3 ubiquitin ligase that controls progression through mitosis and the G1 phase of the cell cycle. The APC/C complex acts by mediating ubiquitination and subsequent degradation of target proteins: it mainly mediates the formation of 'Lys-11'-linked polyubiquitin chains and, to a lower extent, the formation of 'Lys-48'- and 'Lys-63'-linked polyubiquitin chains. The APC/C complex catalyzes assembly of branched 'Lys-11'-/'Lys-48'-linked branched ubiquitin chains on target proteins. The sequence is that of Cell division cycle protein 27 homolog (CDC27) from Homo sapiens (Human).